A 476-amino-acid polypeptide reads, in one-letter code: Glutamate--tRNA ligase (476 aa).

A 'HIGH' region motif is present at residues 9–19; sequence PSPTGTLHLGT. Positions 248-252 match the 'KMSKS' region motif; the sequence is KLSKR. Position 251 (lysine 251) interacts with ATP.

The protein belongs to the class-I aminoacyl-tRNA synthetase family. Glutamate--tRNA ligase type 1 subfamily. In terms of assembly, monomer.

The protein localises to the cytoplasm. The catalysed reaction is tRNA(Glu) + L-glutamate + ATP = L-glutamyl-tRNA(Glu) + AMP + diphosphate. Its function is as follows. Catalyzes the attachment of glutamate to tRNA(Glu) in a two-step reaction: glutamate is first activated by ATP to form Glu-AMP and then transferred to the acceptor end of tRNA(Glu). The polypeptide is Glutamate--tRNA ligase (Prochlorococcus marinus (strain NATL2A)).